Consider the following 294-residue polypeptide: MHSRFQAALTTLAADLQAAIAPMLADPHFPALLEADQVATLQHATGLDEDALAFALLPLAAACARPDLSHFNVGAIARGVSGRWYFGGNMEFLGATMQQTVHAEQSAISHAWLRGETSLRAITVNYTPCGHCRQFMNELNSGLALRIHLPGREAHALEHYLPDAFGPKDLEIKTLLMDEQDHGFPVSGDALTQAAIQAANRCHAPYSHSPSGVALELKDGTIFSGSYAENAAFNPTLPPLQGALNLLSLNGYDYPAIQRAILAEKADAALIQWDATVATLKALGCHNIERVLLG.

CMP/dCMP-type deaminase domains lie at 48 to 168 and 186 to 294; these read DEDA…FGPK and VSGD…VLLG. 89-91 is a substrate binding site; it reads NME. His-102 contacts Zn(2+). The Proton donor role is filled by Glu-104. Zn(2+)-binding residues include Cys-129 and Cys-132.

Belongs to the cytidine and deoxycytidylate deaminase family. In terms of assembly, homodimer. Zn(2+) serves as cofactor.

It catalyses the reaction cytidine + H2O + H(+) = uridine + NH4(+). The enzyme catalyses 2'-deoxycytidine + H2O + H(+) = 2'-deoxyuridine + NH4(+). This enzyme scavenges exogenous and endogenous cytidine and 2'-deoxycytidine for UMP synthesis. The polypeptide is Cytidine deaminase (Klebsiella pneumoniae subsp. pneumoniae (strain ATCC 700721 / MGH 78578)).